We begin with the raw amino-acid sequence, 2216 residues long: RNA-directed RNA polymerase L (2216 aa).

The segment at 26 to 289 is endonuclease; that stretch reads KTSFLSQVNL…ETRTAMLDER (264 aa). Residues Glu-51, Asp-88, and Glu-101 each coordinate Mn(2+). Lys-114 is an active-site residue. Residues 1167-1364 form the RdRp catalytic domain; it reads LDMKCVVRLS…YLSSKFNKFV (198 aa). Asp-1323 is a binding site for Mg(2+).

This sequence belongs to the Bunyavirales RNA polymerase family. In terms of assembly, homomultimer; the oligomeric structure is essential for the polymerase activity. Interacts with nucleoprotein N. Interacts with protein Z; this interaction inhibits viral transcription and replication, Z partially blocks the product exit tunnel for the releasing nascent RNA product. Mn(2+) serves as cofactor. The cofactor is Mg(2+).

It localises to the virion. The protein localises to the host cytoplasm. The catalysed reaction is RNA(n) + a ribonucleoside 5'-triphosphate = RNA(n+1) + diphosphate. RNA-dependent RNA polymerase, which is responsible for the replication and transcription of the viral RNA genome using antigenomic RNA as an intermediate. During transcription, synthesizes subgenomic RNAs and assures their capping by a cap-snatching mechanism, which involves the endonuclease activity cleaving the host capped pre-mRNAs. These short capped RNAs are then used as primers for viral transcription. The 3'-end of subgenomic mRNAs molecules are heterogeneous and not polyadenylated. The replicase function is to direct synthesis of antigenomic and genomic RNA which are encapsidated and non capped. As a consequence of the use of the same enzyme for both transcription and replication, these mechanisms need to be well coordinated. These processes may be regulated by proteins N and Z in a dose-dependent manner. Z protein inhibits the viral polymerase L und thus the viral transcription and RNA synthesis. In Bear Canyon mammarenavirus (isolate Mouse/United States/AV A0070039/2000) (BCNV), this protein is RNA-directed RNA polymerase L.